Consider the following 130-residue polypeptide: Spore coat protein M (130 aa).

In terms of biological role, involved in spore outer coat assembly. May be part of a cross-linked insoluble skeleton that surrounds the spore, serves as a matrix for the assembly of additional outer coat material, and confers structural stability to the final structure. The chain is Spore coat protein M (cotM) from Bacillus subtilis (strain 168).